A 272-amino-acid chain; its full sequence is Dihydropteroate synthase (272 aa).

Residues 1–251 form the Pterin-binding domain; sequence MIKTKIMGIL…GVRVHNVLLN (251 aa). Asn11 lines the Mg(2+) pocket. (7,8-dihydropterin-6-yl)methyl diphosphate contacts are provided by residues Thr51, Asp89, Asn108, Asp172, Lys208, and 244–246; that span reads RVH.

Belongs to the DHPS family. As to quaternary structure, homodimer. The cofactor is Mg(2+).

It carries out the reaction (7,8-dihydropterin-6-yl)methyl diphosphate + 4-aminobenzoate = 7,8-dihydropteroate + diphosphate. It participates in cofactor biosynthesis; tetrahydrofolate biosynthesis; 7,8-dihydrofolate from 2-amino-4-hydroxy-6-hydroxymethyl-7,8-dihydropteridine diphosphate and 4-aminobenzoate: step 1/2. Functionally, catalyzes the condensation of para-aminobenzoate (pABA) with 6-hydroxymethyl-7,8-dihydropterin diphosphate (DHPt-PP) to form 7,8-dihydropteroate (H2Pte), the immediate precursor of folate derivatives. The sequence is that of Dihydropteroate synthase (folP) from Staphylococcus epidermidis (strain ATCC 35984 / DSM 28319 / BCRC 17069 / CCUG 31568 / BM 3577 / RP62A).